Here is a 463-residue protein sequence, read N- to C-terminus: Nicotinate phosphoribosyltransferase pncB2 (463 aa).

Position 202 is a phosphohistidine (H202).

It belongs to the NAPRTase family. In terms of processing, transiently phosphorylated on a His residue during the reaction cycle. Phosphorylation strongly increases the affinity for substrates and increases the rate of nicotinate D-ribonucleotide production. Dephosphorylation regenerates the low-affinity form of the enzyme, leading to product release.

The enzyme catalyses nicotinate + 5-phospho-alpha-D-ribose 1-diphosphate + ATP + H2O = nicotinate beta-D-ribonucleotide + ADP + phosphate + diphosphate. It functions in the pathway cofactor biosynthesis; NAD(+) biosynthesis; nicotinate D-ribonucleotide from nicotinate: step 1/1. Its function is as follows. Involved in the Preiss-Handler pathway, which is a recycling route that permits the salvage of free nicotinamide (NM) and nicotinic acid (Na) involved in the NAD biosynthesis. Catalyzes the synthesis of beta-nicotinate D-ribonucleotide from nicotinate and 5-phospho-D-ribose 1-phosphate at the expense of ATP. It is not able to use nicotinamide. PncB2 appears to be responsible for the increased salvage synthesis of NAD during infection of host tissues. The sequence is that of Nicotinate phosphoribosyltransferase pncB2 (pncB2) from Mycobacterium tuberculosis (strain CDC 1551 / Oshkosh).